A 205-amino-acid polypeptide reads, in one-letter code: LexA repressor (205 aa).

A DNA-binding region (H-T-H motif) is located at residues 28-48; it reads RAEIARRLGFKSANAAEEHLK. Active-site for autocatalytic cleavage activity residues include Ser122 and Lys159.

The protein belongs to the peptidase S24 family. In terms of assembly, homodimer.

The enzyme catalyses Hydrolysis of Ala-|-Gly bond in repressor LexA.. Functionally, represses a number of genes involved in the response to DNA damage (SOS response), including recA and lexA. In the presence of single-stranded DNA, RecA interacts with LexA causing an autocatalytic cleavage which disrupts the DNA-binding part of LexA, leading to derepression of the SOS regulon and eventually DNA repair. This Shewanella loihica (strain ATCC BAA-1088 / PV-4) protein is LexA repressor.